The following is an 866-amino-acid chain: Nitrate reductase (866 aa).

The region spanning 1–57 (MTETRTTCPYCGVGCGVIASRAPHGQVSVRGDEQHPANFGRLCVKGAALGETVGLEG) is the 4Fe-4S Mo/W bis-MGD-type domain. [4Fe-4S] cluster contacts are provided by cysteine 8, cysteine 11, cysteine 15, and cysteine 43.

The protein belongs to the prokaryotic molybdopterin-containing oxidoreductase family. NasA/NapA/NarB subfamily. Requires [4Fe-4S] cluster as cofactor. It depends on Mo-bis(molybdopterin guanine dinucleotide) as a cofactor.

It participates in nitrogen metabolism; nitrate reduction (denitrification); dinitrogen from nitrate: step 1/4. In terms of biological role, nitrate reductase is a key enzyme involved in the first step of nitrate assimilation in plants, fungi and bacteria. In Klebsiella oxytoca, this protein is Nitrate reductase (nasA).